Reading from the N-terminus, the 918-residue chain is Interleukin-6 receptor subunit beta (918 aa).

An N-terminal signal peptide occupies residues 1–22 (MLTLQTWLVQALFIFLTTESTG). Residues 23 to 619 (ELLDPCGYIS…TPKFAQGEIE (597 aa)) are Extracellular-facing. Residues 26 to 120 (DPCGYISPES…LEQNVYGITI (95 aa)) enclose the Ig-like C2-type domain. Cystine bridges form between Cys28-Cys54 and Cys48-Cys103. 3 N-linked (GlcNAc...) asparagine glycosylation sites follow: Asn43, Asn83, and Asn131. Fibronectin type-III domains follow at residues 125 to 216 (PPEK…NFDP), 224 to 324 (PPHN…TYED), 329 to 424 (APSF…FQAT), 426 to 517 (PVMD…LKQA), and 518 to 613 (PPSK…TPKF). Cys134 and Cys144 are joined by a disulfide. Residue Asn157 is glycosylated (N-linked (GlcNAc...) asparagine). Cys172 and Cys182 are disulfide-bonded. Asn227 carries N-linked (GlcNAc...) asparagine glycosylation. The short motif at 310–314 (WSDWS) is the WSXWS motif element. Residues Asn379 and Asn383 are each glycosylated (N-linked (GlcNAc...) asparagine). Asn390 carries an N-linked (GlcNAc...) (complex) asparagine glycan. A disulfide bridge connects residues Cys458 and Cys466. N-linked (GlcNAc...) asparagine glycans are attached at residues Asn553 and Asn564. The chain crosses the membrane as a helical span at residues 620–641 (AIVVPVCLAFLLTTLLGVLFCF). Topologically, residues 642 to 918 (NKRDLIKKHI…TVRQGGYMPQ (277 aa)) are cytoplasmic. Residues 651 to 659 (IWPNVPDPS) carry the Box 1 motif motif. Disordered stretches follow at residues 660–681 (KSHI…SKDQ) and 722–758 (EGHS…STVQ). Ser661 and Ser667 each carry phosphoserine. Residues 731 to 755 (SSCMSSSRPSISSSDENESSQNTSS) are compositionally biased toward low complexity. Phosphoserine occurs at positions 782, 789, 829, and 839.

Belongs to the type I cytokine receptor family. Type 2 subfamily. Component of a hexamer of two molecules each of IL6, IL6R and IL6ST; associates with the complex IL6:IL6R but does not interact with IL6. Forms heterodimers composed of LIFR and IL6ST (type I OSM receptor) which are activated by LIF and OSM. Also forms heterodimers composed of OSMR and IL6ST (type II receptor) which are activated by OSM but not by LIF. Component of a receptor complex composed of IL6ST/GP130, IL27RA/WSX1 and CNTFR which interacts with the neuroprotective peptide humanin. Interacts with HCK. Interacts with INPP5D/SHIP1. Interacts with SRC and YES. Interacts with ARMH4; this interaction prevents IL6ST protein homodimerization and bridges ARMH4 with IL6R and STAT3 and therefore inhibits phosphorylation of STAT3 at 'Tyr-705'. In terms of assembly, (Microbial infection) The homodimer binds two molecules of herpes virus 8/HHV-8 protein vIL-6. In terms of processing, phosphorylation of Ser-782 down-regulates cell surface expression. Heavily N-glycosylated. Glycosylation is required for protein stability and localization in plasma membrane but not for ligand binding. In terms of tissue distribution, found in all the tissues and cell lines examined. Expression not restricted to IL6 responsive cells. As to expression, expressed in blood serum (at protein level).

The protein localises to the cell membrane. Its subcellular location is the secreted. Signal-transducing molecule. The receptor systems for IL6, LIF, OSM, CNTF, IL11, CTF1 and BSF3 can utilize IL6ST for initiating signal transmission. Binding of IL6 to IL6R induces IL6ST homodimerization and formation of a high-affinity receptor complex, which activates the intracellular JAK-MAPK and JAK-STAT3 signaling pathways. That causes phosphorylation of IL6ST tyrosine residues which in turn activates STAT3. In parallel, the IL6 signaling pathway induces the expression of two cytokine receptor signaling inhibitors, SOCS1 and SOCS3, which inhibit JAK and terminate the activity of the IL6 signaling pathway as a negative feedback loop. Also activates the yes-associated protein 1 (YAP) and NOTCH pathways to control inflammation-induced epithelial regeneration, independently of STAT3. Acts as a receptor for the neuroprotective peptide humanin as part of a complex with IL27RA/WSX1 and CNTFR. Mediates signals which regulate immune response, hematopoiesis, pain control and bone metabolism. Has a role in embryonic development. Essential for survival of motor and sensory neurons and for differentiation of astrocytes. Required for expression of TRPA1 in nociceptive neurons. Required for the maintenance of PTH1R expression in the osteoblast lineage and for the stimulation of PTH-induced osteoblast differentiation. Required for normal trabecular bone mass and cortical bone composition. Functionally, binds to the soluble IL6:sIL6R complex (hyper-IL6), thereby blocking IL6 trans-signaling. Inhibits sIL6R-dependent acute phase response. Also blocks IL11 cluster signaling through IL11R. The protein is Interleukin-6 receptor subunit beta of Homo sapiens (Human).